The primary structure comprises 362 residues: Alanine racemase (362 aa).

The Proton acceptor; specific for D-alanine role is filled by Lys-35. Position 35 is an N6-(pyridoxal phosphate)lysine (Lys-35). Arg-130 is a substrate binding site. The active-site Proton acceptor; specific for L-alanine is the Tyr-257. Met-305 is a substrate binding site.

The protein belongs to the alanine racemase family. Pyridoxal 5'-phosphate is required as a cofactor.

The enzyme catalyses L-alanine = D-alanine. It participates in amino-acid biosynthesis; D-alanine biosynthesis; D-alanine from L-alanine: step 1/1. Functionally, catalyzes the interconversion of L-alanine and D-alanine. May also act on other amino acids. The sequence is that of Alanine racemase (alr) from Nitrosomonas europaea (strain ATCC 19718 / CIP 103999 / KCTC 2705 / NBRC 14298).